The following is a 392-amino-acid chain: Immunoglobulin-binding protein EibA (392 aa).

The N-terminal stretch at 1-27 (MSKKFTKAVLSAAMAGVLFGVSFDIMA) is a signal peptide. The surface exposed passenger domain stretch occupies residues 28-301 (AEQSYSALNA…IAANTRTLQQ (274 aa)). Residues 28 to 341 (AEQSYSALNA…GLFQPYSVGK (314 aa)) are Extracellular-facing. A coiled-coil region spans residues 174–215 (ESANSTIVANELEAQKGKLDAQKGELEAQKKNLGELTTRTDK). Residues 187 to 230 (AQKGKLDAQKGELEAQKKNLGELTTRTDKIDAAAAATAAKVESR) form a right-handed coiled-coil (RHcc) region. The segment at 231–256 (TLVGVSSDGTLTRAEGAKNTISVNDG) is saddle domain. A left-handed coiled-coil (LHcc) region spans residues 257–322 (LVALSGRTDR…INENHKEMKR (66 aa)). Residues 299-341 (LQQHSARLDSQQRQINENHKEMKRAAAQSAALTGLFQPYSVGK) form an outer membrane translocation of the passenger domain region. A run of 4 beta stranded transmembrane segments spans residues 342–352 (FNASAAVGGYS), 355–366 (QALAVGVGYRFN), 369–378 (TAAKAGVAFS), and 382–392 (ASWNVGVNFEF). Residues 342–392 (FNASAAVGGYSDEQALAVGVGYRFNEQTAAKAGVAFSDGDASWNVGVNFEF) are translocator domain.

This sequence belongs to the autotransporter-2 (AT-2) (TC 1.B.40) family. Eib subfamily. Homotrimer; can probably form mixed heterotrimers in vivo. Will form mixed heterotrimers with EibD; these are correctly located in the outer membrane and bind IgG Fc, although less well than homotrimers. Does not form trimers with distantly related YadA from Y.enterocolitica; coexpression was lethal and one of the genes is eliminated in vivo. If the full translocator domain (299-392) is exchanged with that of YadA ('368-455'), will form heterotrimers with YadA and vice-versa. In denaturing gels runs as 2 bands of about 121 and 131 kDa; extracting the sample with 88% phenol at 70 degrees Celsius reduces part of the signal to about 45 kDa. Binds the Fc portion of IgG; binds more than 1 Fc per subunit.

It is found in the cell surface. It localises to the cell outer membrane. Binds (in a non-immune fashion) to the Fc portion of human IgG but not IgA; binding occurs on the cell surface. Confers the ability to survive exposure to human serum exposure. Binds to the Fc portion of human IgG and to whole mouse antibodies also via Fc, binds more than 1 Fc or IgG. This is Immunoglobulin-binding protein EibA from Escherichia coli.